Reading from the N-terminus, the 282-residue chain is MHSARLDSFLSQLRWELLCARDTGSPPMSGPLQPKPRTDQNVQPKRQFRASDVLEEDSVCCVEEEEEEGLVAEDKGLPLGCPREHALDWDSGFSEVSGSTWREEEPSVPQRQAPRERPPHSQRFSVSDIPMRSRAAVTNIPPAHRPRPKSTPDACLEHWQGLEAEDWTAALLNRGRSRQPLVLGDNCFADLVHNWMELPEATSEGSDGDVPRARARPPQFLLGLSEQLRRRLARARRTAMASKRLSCPPRSEPDLPADISRFAALMNCRSRQPIIYNDVSYL.

Disordered regions lie at residues 21-50 (RDTG…QFRA) and 92-127 (GFSE…FSVS). Inka box stretches follow at residues 163–200 (EAED…ELPE) and 256–282 (PADI…VSYL).

The protein belongs to the INKA family. In terms of assembly, interacts with PAK4. In terms of tissue distribution, expressed in tissues of the developing head during neurulation.

It localises to the nucleus. The protein resides in the cytoplasm. Functionally, inhibitor of the serine/threonine-protein kinase PAK4. Acts by binding PAK4 in a substrate-like manner, inhibiting the protein kinase activity. The chain is PAK4-inhibitor INKA1 from Mus musculus (Mouse).